A 577-amino-acid polypeptide reads, in one-letter code: F-box/TPR repeat protein pof3 (577 aa).

3 TPR repeats span residues Val6 to Pro39, Ile41 to Asn74, and Arg76 to Met108. Positions Ile138 to Leu180 constitute an F-box domain.

A part of the E3 ubiquitin ligase Skp1-Cullin-1-F-box (SCF) complex. Interacts with cul1, mcl1 and skp1.

It localises to the mitochondrion. The protein resides in the nucleus. Its function is as follows. Has a role in substrate recognition in the Skp1-Cullin-1/Cdc53-F-box (SCF) ubiquitin ligase complex. Required for the maintenance of telomere length and transcriptional silencing at the telomere. Also required for chromosome segregation. This is F-box/TPR repeat protein pof3 (pof3) from Schizosaccharomyces pombe (strain 972 / ATCC 24843) (Fission yeast).